The primary structure comprises 80 residues: Acyl carrier protein (80 aa).

In terms of domain architecture, Carrier spans 4 to 79 (DEVKGQVYDI…DAINYIVEKK (76 aa)). Ser39 is modified (O-(pantetheine 4'-phosphoryl)serine).

It belongs to the acyl carrier protein (ACP) family. In terms of processing, 4'-phosphopantetheine is transferred from CoA to a specific serine of apo-ACP by AcpS. This modification is essential for activity because fatty acids are bound in thioester linkage to the sulfhydryl of the prosthetic group.

The protein localises to the cytoplasm. Its pathway is lipid metabolism; fatty acid biosynthesis. Its function is as follows. Carrier of the growing fatty acid chain in fatty acid biosynthesis. This Chloroherpeton thalassium (strain ATCC 35110 / GB-78) protein is Acyl carrier protein.